A 467-amino-acid chain; its full sequence is Mothers against decapentaplegic homolog 9 (467 aa).

Positions 16–140 constitute an MH1 domain; sequence PAVKRLLGWK…YRRVETPVLP (125 aa). The Zn(2+) site is built by cysteine 68, cysteine 113, cysteine 125, and histidine 130. The tract at residues 174 to 246 is disordered; the sequence is NATYPDSFQQ…SETQSGQPVD (73 aa). Residues 205-220 are compositionally biased toward low complexity; sequence SYPHSPGSPSEPESPY. Residues 273 to 467 enclose the MH2 domain; the sequence is WCSVAYYELN…SPHNPISSVS (195 aa).

This sequence belongs to the dwarfin/SMAD family. In terms of assembly, interaction with the co-SMAD SMAD4. Interacts with PEBP2-alpha subunit. Interacts with RANBP3L. Post-translationally, phosphorylated on serine by BMP (bone morphogenetic proteins) type 1 receptor kinase. In terms of tissue distribution, expressed in heart, brain, placenta, lung, skeletal muscle, prostate, testis, ovary and small intestine. Also expressed in fetal brain, lung and kidney.

The protein localises to the cytoplasm. Its subcellular location is the nucleus. Transcriptional modulator activated by BMP (bone morphogenetic proteins) type 1 receptor kinase. SMAD9 is a receptor-regulated SMAD (R-SMAD). The chain is Mothers against decapentaplegic homolog 9 (SMAD9) from Homo sapiens (Human).